A 513-amino-acid polypeptide reads, in one-letter code: Zinc finger protein 395 (513 aa).

Over residues 17-29 (ARVLGPSASEGPS) the composition is skewed to low complexity. The disordered stretch occupies residues 17–56 (ARVLGPSASEGPSAAPPSEPLLEGAAPQPFTTSDDTPCQE). Positions 45 to 55 (PFTTSDDTPCQ) are enriched in polar residues. Positions 165-174 (MDEMMAAMVL) match the Nuclear export signal motif. The segment at 204-269 (KESGDISDSG…DPFLLDEPAP (66 aa)) is disordered. Residues 209–229 (ISDSGSSTTSGHWSGSSGVST) are compositionally biased toward low complexity. Residue Ser248 is modified to Phosphoserine. A C2H2-type zinc finger spans residues 280–305 (YKCLWPNCGKVLRSIVGIKRHVKALH). The segment at 335-394 (AAAAAAAGTPVPGTPTSEPAPTPSMTGLPLSALPPPLHKAQSSGPEHPGPESSLPSGALS) is disordered. Over residues 348-359 (TPTSEPAPTPSM) the composition is skewed to polar residues. Phosphoserine is present on residues Ser376 and Ser449. Low complexity predominate over residues 376-391 (SSGPEHPGPESSLPSG).

In terms of assembly, interacts with repression-mediating E2 binding site P2 of human papillomavirus type 8 (HPV8). In terms of tissue distribution, widely expressed.

It localises to the cytoplasm. The protein localises to the nucleus. Plays a role in papillomavirus genes transcription. In Homo sapiens (Human), this protein is Zinc finger protein 395 (ZNF395).